The sequence spans 25 residues: Cytochrome c oxidase polypeptide VIIc (25 aa).

The disordered stretch occupies residues 1 to 25 (SHYSEGPGQNLPFSVQNKXRLLGMM).

Belongs to the cytochrome c oxidase VIIc family. In terms of assembly, component of the cytochrome c oxidase (complex IV, CIV), a multisubunit enzyme composed of 14 subunits. The complex is composed of a catalytic core of 3 subunits MT-CO1, MT-CO2 and MT-CO3, encoded in the mitochondrial DNA, and 11 supernumerary subunits COX4I, COX5A, COX5B, COX6A, COX6B, COX6C, COX7A, COX7B, COX7C, COX8 and NDUFA4, which are encoded in the nuclear genome. The complex exists as a monomer or a dimer and forms supercomplexes (SCs) in the inner mitochondrial membrane with NADH-ubiquinone oxidoreductase (complex I, CI) and ubiquinol-cytochrome c oxidoreductase (cytochrome b-c1 complex, complex III, CIII), resulting in different assemblies (supercomplex SCI(1)III(2)IV(1) and megacomplex MCI(2)III(2)IV(2)). Interacts with RAB5IF.

The protein resides in the mitochondrion inner membrane. Its pathway is energy metabolism; oxidative phosphorylation. Component of the cytochrome c oxidase, the last enzyme in the mitochondrial electron transport chain which drives oxidative phosphorylation. The respiratory chain contains 3 multisubunit complexes succinate dehydrogenase (complex II, CII), ubiquinol-cytochrome c oxidoreductase (cytochrome b-c1 complex, complex III, CIII) and cytochrome c oxidase (complex IV, CIV), that cooperate to transfer electrons derived from NADH and succinate to molecular oxygen, creating an electrochemical gradient over the inner membrane that drives transmembrane transport and the ATP synthase. Cytochrome c oxidase is the component of the respiratory chain that catalyzes the reduction of oxygen to water. Electrons originating from reduced cytochrome c in the intermembrane space (IMS) are transferred via the dinuclear copper A center (CU(A)) of subunit 2 and heme A of subunit 1 to the active site in subunit 1, a binuclear center (BNC) formed by heme A3 and copper B (CU(B)). The BNC reduces molecular oxygen to 2 water molecules using 4 electrons from cytochrome c in the IMS and 4 protons from the mitochondrial matrix. The sequence is that of Cytochrome c oxidase polypeptide VIIc from Oncorhynchus mykiss (Rainbow trout).